The sequence spans 342 residues: Transmembrane protein 115 homolog (342 aa).

Residues 1–21 (MQYSSRFLELNIPDSFLNINK) lie on the Cytoplasmic side of the membrane. A helical transmembrane segment spans residues 22-42 (IPDATKFITVTYICLTATLFC). The Lumenal segment spans residues 43–121 (IRRSLYNKLV…NWNSSKEMFK (79 aa)). N-linked (GlcNAc...) asparagine glycosylation occurs at asparagine 114. The helical transmembrane segment at 122 to 142 (FIIVLGSLTNVLIIMLTLLVS) threads the bilayer. At 143-159 (FFSNKVRLDIPLDGNYT) the chain is on the cytoplasmic side. A helical transmembrane segment spans residues 160–180 (ILIGFPIIYRQLLPETTIIHL). Topologically, residues 181-207 (KTPQFLAKNFRFKLLPIFVMFTMTVTQ) are lumenal. A helical membrane pass occupies residues 208–228 (IIWFHHFAQLFSIWVTFFASW). At 229–342 (SYLRFFQKLA…QVLEERMVNP (114 aa)) the chain is on the cytoplasmic side.

It belongs to the TMEM115 family. In terms of assembly, homooligomer.

It is found in the golgi apparatus membrane. Its function is as follows. May play a role in retrograde transport of proteins from the Golgi to the endoplasmic reticulum. The sequence is that of Transmembrane protein 115 homolog from Saccharomyces cerevisiae (strain ATCC 204508 / S288c) (Baker's yeast).